A 146-amino-acid polypeptide reads, in one-letter code: Core protein OPG114 (146 aa).

The protein belongs to the orthopoxvirus OPG114 family. Part of a complex composed of the kinase OPG054, OPG092, OPG100, OPG114, OPG115, OPG142 and OPG157.

The protein resides in the virion. Functionally, late protein which is part of a large complex required for early virion morphogenesis. This complex participates in the formation of virosomes and the incorporation of virosomal contents into nascent immature virions. The polypeptide is Core protein OPG114 (OPG114) (Monkeypox virus).